We begin with the raw amino-acid sequence, 357 residues long: DNA primase small subunit PriS (357 aa).

Residues D105, D107, and D259 contribute to the active site.

It belongs to the eukaryotic-type primase small subunit family. Heterodimer of a small subunit (PriS) and a large subunit (PriL). Mg(2+) serves as cofactor. Requires Mn(2+) as cofactor.

Its function is as follows. Catalytic subunit of DNA primase, an RNA polymerase that catalyzes the synthesis of short RNA molecules used as primers for DNA polymerase during DNA replication. The small subunit contains the primase catalytic core and has DNA synthesis activity on its own. Binding to the large subunit stabilizes and modulates the activity, increasing the rate of DNA synthesis while decreasing the length of the DNA fragments, and conferring RNA synthesis capability. The DNA polymerase activity may enable DNA primase to also catalyze primer extension after primer synthesis. May also play a role in DNA repair. The chain is DNA primase small subunit PriS from Methanococcus maripaludis (strain C5 / ATCC BAA-1333).